The primary structure comprises 262 residues: Probable ketoamine kinase TTHA1179 (262 aa).

79–81 (AYL) contributes to the ATP binding site. The active-site Proton acceptor is aspartate 172.

It belongs to the fructosamine kinase family.

The enzyme catalyses N(6)-(D-ribulosyl)-L-lysine + ATP = N(6)-(3-O-phospho-D-ribulosyl)-L-lysine + ADP + H(+). It carries out the reaction N(6)-(D-erythrulosyl)-L-lysine + ATP = N(6)-(3-O-phospho-D-erythrulosyl)-L-lysine + ADP + H(+). The catalysed reaction is N(6)-D-ribulosyl-L-lysyl-[protein] + ATP = N(6)-(3-O-phospho-D-ribulosyl)-L-lysyl-[protein] + ADP + H(+). It catalyses the reaction N(6)-(D-erythrulosyl)-L-lysyl-[protein] + ATP = N(6)-(3-O-phospho-D-erythrulosyl)-L-lysyl-[protein] + ADP + H(+). Ketoamine kinase that phosphorylates ketoamines, such as erythruloselysine and ribuloselysine, on the third carbon of the sugar moiety to generate ketoamine 3-phosphate. Has higher activity on free lysine (erythruloselysine and ribuloselysine), than on ribuloselysine and erythruloselysine residues on glycated proteins. In Thermus thermophilus (strain ATCC 27634 / DSM 579 / HB8), this protein is Probable ketoamine kinase TTHA1179.